The chain runs to 539 residues: Protein PNS1 (539 aa).

The disordered stretch occupies residues 1 to 38; it reads MPLNEKYERPPQPPPAYDPNHRPPSSSENSAAANVNDG. Over 1-81 the chain is Cytoplasmic; the sequence is MPLNEKYERP…NDNKPRWNDW (81 aa). A compositionally biased stretch (low complexity) spans 25–36; the sequence is SSSENSAAANVN. A helical transmembrane segment spans residues 82–102; sequence PFTIFFLCTVGGFIAIAAITL. The Extracellular portion of the chain corresponds to 103–129; that stretch reads RAWSQTYSSTGSGIYDGVNTGTLNTNA. A helical transmembrane segment spans residues 130–150; it reads AILLVFVCIIALVFSVLGLTL. Residues 151-157 are Cytoplasmic-facing; it reads CRIFPKQ. A helical membrane pass occupies residues 158-178; it reads FIYCGMVINLVASLGTAIMYM. Residues 179 to 182 lie on the Extracellular side of the membrane; the sequence is SLRY. The chain crosses the membrane as a helical span at residues 183-203; sequence WSAGIVFLVFTFMTAWCYWGM. The Cytoplasmic segment spans residues 204-226; the sequence is RSRIPLSVAVLKVVVDAMKKCPQ. A helical membrane pass occupies residues 227–247; it reads IFFVSFVGALVASAFGFLFSA. Residues 248–274 are Extracellular-facing; that stretch reads VIVATYIKYDPNSSNGGCDVSGGSCSH. Asparagine 259 carries an N-linked (GlcNAc...) asparagine glycan. The chain crosses the membrane as a helical span at residues 275–295; it reads SKLIGVLVVVFFCGYYISEVI. The Cytoplasmic segment spans residues 296-332; sequence RNVIHCVISGVFGSWYYMSKSDQGMPRWPAFGALKRA. A helical membrane pass occupies residues 333–353; it reads MTYSFGSICFGSLLVALIDLL. Residues 354 to 371 are Extracellular-facing; it reads RQILQMIRHDVTSSGGGQ. A helical membrane pass occupies residues 372–392; it reads IAIQILFMVFDWIIGFLKWLA. At 393–436 the chain is on the cytoplasmic side; it reads EYFNHYAYSFIALYGKPYLRAAKETWYMLREKGMDALINDNLIN. A helical transmembrane segment spans residues 437 to 457; that stretch reads IALGLFSMFASYMTALFTFLY. The Extracellular segment spans residues 458–473; the sequence is LRFTSPQYNSNGAYNG. The helical transmembrane segment at 474–494 threads the bilayer; that stretch reads ALMAFSFVIALQICNIATEAI. Residues 495-539 lie on the Cytoplasmic side of the membrane; sequence RSGTATFFVALGNDPEVFHHSYPHRFDEIFRAYPDVLRKLSHQNV.

Belongs to the CTL (choline transporter-like) family.

It localises to the cell membrane. In terms of biological role, probably involved in transport through the plasma membrane. The polypeptide is Protein PNS1 (PNS1) (Saccharomyces cerevisiae (strain ATCC 204508 / S288c) (Baker's yeast)).